The chain runs to 345 residues: V-type proton ATPase subunit d (345 aa).

M1 carries the N-acetylmethionine modification.

It belongs to the V-ATPase V0D/AC39 subunit family. V-ATPase is a heteromultimeric enzyme composed of a peripheral catalytic V1 complex (components A to H) attached to an integral membrane V0 proton pore complex (components: a, c, c', c'', d, e, f and VOA1).

The protein resides in the vacuole membrane. In terms of biological role, subunit of the V0 complex of vacuolar(H+)-ATPase (V-ATPase), a multisubunit enzyme composed of a peripheral complex (V1) that hydrolyzes ATP and a membrane integral complex (V0) that translocates protons. V-ATPase is responsible for acidifying and maintaining the pH of intracellular compartments. This subunit is a non-integral membrane component of the membrane pore domain and is required for proper assembly of the V0 sector. Might be involved in the regulated assembly of V1 subunits onto the membrane sector or alternatively may prevent the passage of protons through V0 pores. The polypeptide is V-type proton ATPase subunit d (Saccharomyces cerevisiae (strain ATCC 204508 / S288c) (Baker's yeast)).